The primary structure comprises 456 residues: Arginine biosynthesis bifunctional protein ArgJ, mitochondrial (456 aa).

Residues Thr-184, Lys-213, Thr-224, Glu-311, Asn-451, and Thr-456 each coordinate substrate. Thr-224 functions as the Nucleophile in the catalytic mechanism.

The protein belongs to the ArgJ family. In terms of assembly, heterodimer of an alpha and a beta chain. Post-translationally, the alpha and beta chains are autoproteolytically processed from a single precursor protein within the mitochondrion.

The protein localises to the mitochondrion matrix. It catalyses the reaction N(2)-acetyl-L-ornithine + L-glutamate = N-acetyl-L-glutamate + L-ornithine. The enzyme catalyses L-glutamate + acetyl-CoA = N-acetyl-L-glutamate + CoA + H(+). The protein operates within amino-acid biosynthesis; L-arginine biosynthesis; L-ornithine and N-acetyl-L-glutamate from L-glutamate and N(2)-acetyl-L-ornithine (cyclic): step 1/1. It functions in the pathway amino-acid biosynthesis; L-arginine biosynthesis; N(2)-acetyl-L-ornithine from L-glutamate: step 1/4. Catalyzes two activities which are involved in the cyclic version of arginine biosynthesis: the synthesis of acetylglutamate from glutamate and acetyl-CoA, and of ornithine by transacetylation between acetylornithine and glutamate. The sequence is that of Arginine biosynthesis bifunctional protein ArgJ, mitochondrial from Neosartorya fischeri (strain ATCC 1020 / DSM 3700 / CBS 544.65 / FGSC A1164 / JCM 1740 / NRRL 181 / WB 181) (Aspergillus fischerianus).